The sequence spans 968 residues: Protein translocase subunit SecA (968 aa).

Residues Gln-86, 104 to 108 (GEGKT), and Asp-494 each bind ATP. Residues 835–968 (PAESAEESTD…RAAKAAKKRR (134 aa)) form a disordered region. 2 stretches are compositionally biased toward low complexity: residues 883–892 (ARVATRPAAE) and 910–923 (SAPS…FSEG). Residues 956-968 (ARRRAAKAAKKRR) are compositionally biased toward basic residues.

It belongs to the SecA family. In terms of assembly, monomer and homodimer. Part of the essential Sec protein translocation apparatus which comprises SecA, SecYEG and auxiliary proteins SecDF. Other proteins may also be involved.

Its subcellular location is the cell membrane. It is found in the cytoplasm. The catalysed reaction is ATP + H2O + cellular proteinSide 1 = ADP + phosphate + cellular proteinSide 2.. Part of the Sec protein translocase complex. Interacts with the SecYEG preprotein conducting channel. Has a central role in coupling the hydrolysis of ATP to the transfer of proteins into and across the cell membrane, serving as an ATP-driven molecular motor driving the stepwise translocation of polypeptide chains across the membrane. This Beutenbergia cavernae (strain ATCC BAA-8 / DSM 12333 / CCUG 43141 / JCM 11478 / NBRC 16432 / NCIMB 13614 / HKI 0122) protein is Protein translocase subunit SecA.